We begin with the raw amino-acid sequence, 237 residues long: Ribonuclease PH (237 aa).

Residues Arg-86 and 124-126 each bind phosphate; that span reads GTR.

Belongs to the RNase PH family. In terms of assembly, homohexameric ring arranged as a trimer of dimers.

The enzyme catalyses tRNA(n+1) + phosphate = tRNA(n) + a ribonucleoside 5'-diphosphate. Functionally, phosphorolytic 3'-5' exoribonuclease that plays an important role in tRNA 3'-end maturation. Removes nucleotide residues following the 3'-CCA terminus of tRNAs; can also add nucleotides to the ends of RNA molecules by using nucleoside diphosphates as substrates, but this may not be physiologically important. Probably plays a role in initiation of 16S rRNA degradation (leading to ribosome degradation) during starvation. This is Ribonuclease PH from Cereibacter sphaeroides (strain ATCC 17025 / ATH 2.4.3) (Rhodobacter sphaeroides).